The sequence spans 436 residues: GTPase Der (436 aa).

EngA-type G domains lie at 4 to 167 (PVVA…PKVE) and 176 to 351 (IRFC…ESHN). GTP is bound by residues 10-17 (GRPNVGKS), 57-61 (DTGGI), 119-122 (NKVD), 182-189 (GRPNVGKS), 229-233 (DTAGM), and 294-297 (NKWD). The KH-like domain maps to 352–436 (IRVQTNVLND…PIRIIARARD (85 aa)).

It belongs to the TRAFAC class TrmE-Era-EngA-EngB-Septin-like GTPase superfamily. EngA (Der) GTPase family. In terms of assembly, associates with the 50S ribosomal subunit.

GTPase that plays an essential role in the late steps of ribosome biogenesis. The polypeptide is GTPase Der (Bacillus cytotoxicus (strain DSM 22905 / CIP 110041 / 391-98 / NVH 391-98)).